Consider the following 146-residue polypeptide: MNYIYSATTNSFYPLEMKEDYTQAGSWPDDAVEVDEQVYIEFSGLPPKGKIRIAGENGFPAWSEIPPPTHEEQIAAAELKKQQLINQANDYMNSKQWAGKAAIGRLKGEELAQYNLWLDYLDALELVDTSSAPDIEWPTPPAVQAR.

The protein to E.coli YmfS.

This is an uncharacterized protein from Escherichia coli (strain K12).